The following is a 339-amino-acid chain: Longiborneol synthase CLM1 (339 aa).

Polar residues predominate over residues 1 to 17 (MLATPTLSNFDKPSLPS). A disordered region spans residues 1 to 21 (MLATPTLSNFDKPSLPSSEGG). 4 residues coordinate Mg(2+): Asp-112, Asn-241, Ser-245, and Glu-249. Positions 241–249 (NDVLSFYKE) match the NDXXSXXXE magnesium-binding motif motif.

It belongs to the trichodiene synthase family. It depends on Mg(2+) as a cofactor. Requires Mn(2+) as cofactor.

The enzyme catalyses (2E,6E)-farnesyl diphosphate + H2O = (-)-longiborneol + diphosphate. The protein operates within mycotoxin biosynthesis. In terms of biological role, terpene cyclase involved in the biosynthesis of culmorin, a tricyclic sesquiterpene diol reported to have antifungal activity and some phytotoxicity to wheat coleoptile tissue, contributing to Fusarium head blight disease. The terpene cyclase CLM1 is responsible for the cyclization of farnesyl diphosphate into the intermediate longiborneol. Longiborneol is then hydroxylated in a regio- and endo-stereoselective manner at position C-11 by the cytochrome P450 monooxygenase CLM2 to produce culmorin. Additional non-specific oxygenases are also able to hydroxylate longiborneol at other sites than C-11 leading to 3-hydroxylongiborneol, 5-hydroxylongiborneol, 12-hydroxylongiborneol and 15-hydroxylongiborneol. Moreover, another oxygenase capable of installing a C-11 exo-hydroxy group in longiborneol can also yield 11-epi-acetylculmorin. The production of these longiborneol derivatives is dwarfed by the high abundance of culmorin, suggesting that CLM2 displays superior enzymatic activity to the unidentified, possibly promiscuous, additional oxygenases. This Gibberella zeae (strain ATCC MYA-4620 / CBS 123657 / FGSC 9075 / NRRL 31084 / PH-1) (Wheat head blight fungus) protein is Longiborneol synthase CLM1.